The following is a 101-amino-acid chain: Apolipoprotein C-II (101 aa).

The N-terminal stretch at 1–22 (MGTRFLLALFLVLLVLGFEVQG) is a signal peptide. A lipid binding region spans residues 66–74 (TVDEKLRDM). A lipoprotein lipase cofactor region spans residues 78–101 (STAAMSTYAGILTDQVLSMLKGEE).

Belongs to the apolipoprotein C2 family. In terms of processing, proapolipoprotein C-II is synthesized as a sialic acid containing glycoprotein which is subsequently desialylated prior to its proteolytic processing. Post-translationally, proapolipoprotein C-II, the major form found in plasma undergoes proteolytic cleavage of its N-terminal hexapeptide to generate apolipoprotein C-II, which occurs as the minor form in plasma.

It localises to the secreted. Functionally, component of chylomicrons, very low-density lipoproteins (VLDL), low-density lipoproteins (LDL), and high-density lipoproteins (HDL) in plasma. Plays an important role in lipoprotein metabolism as an activator of lipoprotein lipase. Both proapolipoprotein C-II and apolipoprotein C-II can activate lipoprotein lipase. The chain is Apolipoprotein C-II (APOC2) from Plecturocebus moloch (Dusky titi monkey).